A 416-amino-acid polypeptide reads, in one-letter code: D-amino acid dehydrogenase (416 aa).

An FAD-binding site is contributed by Val3–Tyr17.

Belongs to the DadA oxidoreductase family. FAD is required as a cofactor.

It carries out the reaction a D-alpha-amino acid + A + H2O = a 2-oxocarboxylate + AH2 + NH4(+). It participates in amino-acid degradation; D-alanine degradation; NH(3) and pyruvate from D-alanine: step 1/1. In terms of biological role, oxidative deamination of D-amino acids. This Sinorhizobium medicae (strain WSM419) (Ensifer medicae) protein is D-amino acid dehydrogenase.